Reading from the N-terminus, the 249-residue chain is tRNA pseudouridine synthase A (249 aa).

Asp-53 (nucleophile) is an active-site residue. Residue Tyr-111 participates in substrate binding.

This sequence belongs to the tRNA pseudouridine synthase TruA family. Homodimer.

The enzyme catalyses uridine(38/39/40) in tRNA = pseudouridine(38/39/40) in tRNA. Formation of pseudouridine at positions 38, 39 and 40 in the anticodon stem and loop of transfer RNAs. This chain is tRNA pseudouridine synthase A, found in Streptococcus equi subsp. zooepidemicus (strain MGCS10565).